The following is a 1480-amino-acid chain: Cystic fibrosis transmembrane conductance regulator (1480 aa).

Residues 1–77 (MQRSPLEKAS…KLINALRRCF (77 aa)) lie on the Cytoplasmic side of the membrane. A helical membrane pass occupies residues 78-98 (FWRFMFYGILLYLGEVTKAVQ). The ABC transmembrane type-1 1 domain occupies 81–365 (FMFYGILLYL…WAVQTWYDSL (285 aa)). The Extracellular portion of the chain corresponds to 99–122 (PLLLGRIIASYDPDNKTERSIAIY). The helical transmembrane segment at 123-146 (LGIGLCLLFIVRTLLLHPAIFGLH) threads the bilayer. Topologically, residues 147-195 (HIGMQMRIAMFSLIYKKTLKLSSRVLDKISIGQLVSLLSNNLNKFDEGL) are cytoplasmic. The chain crosses the membrane as a helical span at residues 196 to 216 (ALAHFVWIAPLQVALLMGLIW). The Extracellular segment spans residues 217–222 (ELLQAS). Residues 223–243 (VFCGLGFLIVLALFQAGLGRM) form a helical membrane-spanning segment. Topologically, residues 244 to 298 (MMKYRDQRAGKINERLVITSEMIENIQSVKAYCWEEAMEKMIENLRQTELKLTRK) are cytoplasmic. Residues 299–319 (AAYVRYFNSSAFFFSGFFVVF) form a helical membrane-spanning segment. At 320-339 (LSVLPYALIKGIILRKIFTT) the chain is on the extracellular side. The chain crosses the membrane as a helical span at residues 340–358 (ISFCIVLRMAVTRQFPWAV). Topologically, residues 359-858 (QTWYDSLGAI…YLRYITLHKS (500 aa)) are cytoplasmic. ATP-binding positions include Trp401, Ser434, 458–465 (GSTGAGKT), and Gln493. Positions 423-646 (NGHDNLFFSN…RPDFSSKLMG (224 aa)) constitute an ABC transporter 1 domain. Cys524 carries S-palmitoyl cysteine lipidation. Phosphoserine occurs at positions 549 and 660. The interval 654 to 831 (SSERRNSILT…EEINEEDLKE (178 aa)) is disordered R region. Ser670 carries the phosphoserine; by PKA modification. The residue at position 686 (Ser686) is a Phosphoserine. Lys688 participates in a covalent cross-link: Glycyl lysine isopeptide (Lys-Gly) (interchain with G-Cter in ubiquitin). Ser700 and Ser712 each carry phosphoserine. Position 717 is a phosphothreonine (Thr717). A phosphoserine mark is found at Ser737, Ser753, Ser768, Ser790, Ser795, and Ser813. The chain crosses the membrane as a helical span at residues 859–879 (LIFVLIWCLVIFLAEVAASLV). One can recognise an ABC transmembrane type-1 2 domain in the interval 859–1155 (LIFVLIWCLV…AVNSSIDVDS (297 aa)). Topologically, residues 880-918 (VLWLLGNTSFQDKGNSTYSRNNSYAVIITNTSSYYVFYI) are extracellular. Asn894, Asn900, and Asn909 each carry an N-linked (GlcNAc...) asparagine glycan. Residues 919-939 (YVGVADTLLALGFFRGLPLVH) traverse the membrane as a discontinuously helical segment. At 940–990 (TLITVSKILHHKMLHSVLQAPMSTLNTLKAGGILNRFSKDIAILDDLLPLT) the chain is on the cytoplasmic side. A helical transmembrane segment spans residues 991-1011 (IFDFIQLLLIVIGAIAVVSVL). Over 1012 to 1013 (QP) the chain is Extracellular. A helical membrane pass occupies residues 1014 to 1034 (YIFLATVPVIAAFILLRAYFL). Over 1035-1095 (QTSQQLKQLE…TANWFLYLST (61 aa)) the chain is Cytoplasmic. Residues 1096–1116 (LRWFQMRIEMIFVIFFIAVTF) traverse the membrane as a helical segment. Over 1117–1130 (ISILTTGEGEGTVG) the chain is Extracellular. A helical membrane pass occupies residues 1131–1151 (IILTLAMNIMSTLQWAVNSSI). Residues 1152-1480 (DVDSLMRSVS…TEEEVQETRL (329 aa)) lie on the Cytoplasmic side of the membrane. An ABC transporter 2 domain is found at 1210–1443 (MTIKDLTAKY…KSLFQQAISH (234 aa)). ATP is bound by residues Tyr1219 and 1244 to 1251 (GRTGSGKS). Residues 1386–1480 (RALKQAFADC…TEEEVQETRL (95 aa)) are interaction with GORASP2. Residue Cys1395 is the site of S-palmitoyl cysteine attachment. Phosphoserine is present on residues Ser1444 and Ser1456. Residues 1452–1480 (HRNSSKYKSRPQIASLKEETEEEVQETRL) are disordered. Residues 1470–1480 (ETEEEVQETRL) show a composition bias toward acidic residues. Positions 1478-1480 (TRL) match the PDZ-binding motif.

The protein belongs to the ABC transporter superfamily. ABCC family. CFTR transporter (TC 3.A.1.202) subfamily. As to quaternary structure, monomer; does not require oligomerization for channel activity. May form oligomers in the membrane. Interacts with SLC26A3, SLC26A6 and NHERF1. Interacts with SHANK2. Interacts with MYO6. Interacts (via C-terminus) with GOPC (via PDZ domain); this promotes CFTR internalization and thereby decreases channel activity. Interacts with SLC4A7 through NHERF1. Found in a complex with MYO5B and RAB11A. Interacts with ANO1. Interacts with SLC26A8. Interacts with AHCYL1; the interaction increases CFTR activity. Interacts with CSE1L. The core-glycosylated form interacts with GORASP2 (via PDZ GRASP-type 1 domain) in respone to ER stress. Interacts with MARCHF2; the interaction leads to CFTR ubiqtuitination and degradation. Interacts with ADGRG2. N-glycosylated. Post-translationally, phosphorylated; cAMP treatment promotes phosphorylation and activates the channel. Dephosphorylation decreases the ATPase activity (in vitro). Phosphorylation at PKA sites activates the channel. Phosphorylation at PKC sites enhances the response to phosphorylation by PKA. Phosphorylated by AMPK; this inhibits channel activity. In terms of processing, ubiquitinated, leading to its degradation in the lysosome. Deubiquitination by USP10 in early endosomes enhances its endocytic recycling to the cell membrane. Ubiquitinated by RNF185 during ER stress. Ubiquitinated by MARCHF2.

The protein resides in the apical cell membrane. It is found in the early endosome membrane. The protein localises to the cell membrane. It localises to the recycling endosome membrane. Its subcellular location is the endoplasmic reticulum membrane. The protein resides in the nucleus. The enzyme catalyses ATP + H2O + closed Cl(-) channel = ADP + phosphate + open Cl(-) channel.. It carries out the reaction chloride(in) = chloride(out). The catalysed reaction is hydrogencarbonate(in) = hydrogencarbonate(out). It catalyses the reaction ATP + H2O = ADP + phosphate + H(+). Its function is as follows. Epithelial ion channel that plays an important role in the regulation of epithelial ion and water transport and fluid homeostasis. Mediates the transport of chloride ions across the cell membrane. Possesses an intrinsic ATPase activity and utilizes ATP to gate its channel; the passive flow of anions through the channel is gated by cycles of ATP binding and hydrolysis by the ATP-binding domains. The ion channel is also permeable to HCO(3)(-); selectivity depends on the extracellular chloride concentration. Exerts its function also by modulating the activity of other ion channels and transporters. Contributes to the regulation of the pH and the ion content of the epithelial fluid layer. Modulates the activity of the epithelial sodium channel (ENaC) complex, in part by regulating the cell surface expression of the ENaC complex. May regulate bicarbonate secretion and salvage in epithelial cells by regulating the transporter SLC4A7. Can inhibit the chloride channel activity of ANO1. Plays a role in the chloride and bicarbonate homeostasis during sperm epididymal maturation and capacitation. The sequence is that of Cystic fibrosis transmembrane conductance regulator from Plecturocebus moloch (Dusky titi monkey).